A 351-amino-acid polypeptide reads, in one-letter code: Glucose 1-dehydrogenase 1 (351 aa).

Cys-39 is a binding site for Zn(2+). Residue Thr-41 participates in substrate binding. Zn(2+) is bound by residues His-64 and Glu-65. Positions 113 and 149 each coordinate substrate. Residue Glu-149 participates in Zn(2+) binding. NADP(+)-binding positions include 182–185, 265–267, and 292–294; these read AGPI, LGI, and ATN. Residue Asn-294 coordinates substrate.

Belongs to the zinc-containing alcohol dehydrogenase family. Glucose 1-dehydrogenase subfamily. Requires Zn(2+) as cofactor.

It carries out the reaction D-glucose + NAD(+) = D-glucono-1,5-lactone + NADH + H(+). The catalysed reaction is D-glucose + NADP(+) = D-glucono-1,5-lactone + NADPH + H(+). Its function is as follows. Catalyzes the NAD(P)(+)-dependent oxidation of D-glucose to D-gluconate via gluconolactone. Can utilize both NAD(+) and NADP(+) as electron acceptor. Is involved in the degradation of glucose through a non-phosphorylative variant of the Entner-Doudoroff pathway. This chain is Glucose 1-dehydrogenase 1, found in Vulcanisaeta moutnovskia (strain 768-28).